We begin with the raw amino-acid sequence, 110 residues long: Phosphoribosyl-ATP pyrophosphatase (110 aa).

This sequence belongs to the PRA-PH family.

The protein resides in the cytoplasm. It catalyses the reaction 1-(5-phospho-beta-D-ribosyl)-ATP + H2O = 1-(5-phospho-beta-D-ribosyl)-5'-AMP + diphosphate + H(+). Its pathway is amino-acid biosynthesis; L-histidine biosynthesis; L-histidine from 5-phospho-alpha-D-ribose 1-diphosphate: step 2/9. The chain is Phosphoribosyl-ATP pyrophosphatase from Stutzerimonas stutzeri (strain A1501) (Pseudomonas stutzeri).